We begin with the raw amino-acid sequence, 106 residues long: L-rhamnose mutarotase (106 aa).

Tyr20 contacts substrate. The active-site Proton donor is His24. Substrate contacts are provided by residues Tyr43 and 78 to 79 (WW).

The protein belongs to the rhamnose mutarotase family. In terms of assembly, homodimer.

The protein resides in the cytoplasm. It catalyses the reaction alpha-L-rhamnose = beta-L-rhamnose. It participates in carbohydrate metabolism; L-rhamnose metabolism. Involved in the anomeric conversion of L-rhamnose. This chain is L-rhamnose mutarotase, found in Brucella anthropi (strain ATCC 49188 / DSM 6882 / CCUG 24695 / JCM 21032 / LMG 3331 / NBRC 15819 / NCTC 12168 / Alc 37) (Ochrobactrum anthropi).